The chain runs to 331 residues: C4-dicarboxylate-binding periplasmic protein DctP (331 aa).

The first 23 residues, 1–23 (MLKHTAKALVCALSLTVAGIVQA), serve as a signal peptide directing secretion.

Belongs to the bacterial solute-binding protein 7 family. In terms of assembly, the complex comprises the extracytoplasmic solute receptor protein DctP, and the two transmembrane proteins DctQ and DctM.

It is found in the periplasm. Part of the tripartite ATP-independent periplasmic (TRAP) transport system DctPQM involved in C4-dicarboxylates uptake. In Pseudomonas aeruginosa (strain ATCC 15692 / DSM 22644 / CIP 104116 / JCM 14847 / LMG 12228 / 1C / PRS 101 / PAO1), this protein is C4-dicarboxylate-binding periplasmic protein DctP.